Reading from the N-terminus, the 355-residue chain is Anthranilate phosphoribosyltransferase (355 aa).

Residues Gly-102, 105–106 (GD), Ser-110, 112–115 (NIST), 130–138 (KHGNRSVSS), and Ser-142 each bind 5-phospho-alpha-D-ribose 1-diphosphate. Residue Gly-102 participates in anthranilate binding. Residue Ser-114 coordinates Mg(2+). Asn-133 serves as a coordination point for anthranilate. Arg-188 provides a ligand contact to anthranilate. Residues Asp-246 and Glu-247 each contribute to the Mg(2+) site.

It belongs to the anthranilate phosphoribosyltransferase family. In terms of assembly, homodimer. Requires Mg(2+) as cofactor.

The catalysed reaction is N-(5-phospho-beta-D-ribosyl)anthranilate + diphosphate = 5-phospho-alpha-D-ribose 1-diphosphate + anthranilate. It functions in the pathway amino-acid biosynthesis; L-tryptophan biosynthesis; L-tryptophan from chorismate: step 2/5. In terms of biological role, catalyzes the transfer of the phosphoribosyl group of 5-phosphorylribose-1-pyrophosphate (PRPP) to anthranilate to yield N-(5'-phosphoribosyl)-anthranilate (PRA). This is Anthranilate phosphoribosyltransferase from Pectobacterium carotovorum subsp. carotovorum (strain PC1).